The primary structure comprises 209 residues: MAKVYVFDHPLIQHKLTYIRDVHTGTKEFRELVDEVATLMAFEITRDLPLEEVDVETPVQVAKSNVISGKKLGVVPILRAGLGMVDGILKLIPAAKVGHVGLYRDPKTLKPVEYYVKLPSDVEEREFIVVDPMLATGGSAVEALNSLKKRGAKNIRFMCLIAAPEGVEEMQKHHPDVDIYIAALDEKLNEKGYIIPGLGDAGDRMYGTK.

Residues R79, R104, and 131–139 (DPMLATGGS) contribute to the 5-phospho-alpha-D-ribose 1-diphosphate site. Uracil contacts are provided by residues I194 and 199–201 (GDA). 5-phospho-alpha-D-ribose 1-diphosphate is bound at residue D200.

Belongs to the UPRTase family. Requires Mg(2+) as cofactor.

The enzyme catalyses UMP + diphosphate = 5-phospho-alpha-D-ribose 1-diphosphate + uracil. The protein operates within pyrimidine metabolism; UMP biosynthesis via salvage pathway; UMP from uracil: step 1/1. With respect to regulation, allosterically activated by GTP. Catalyzes the conversion of uracil and 5-phospho-alpha-D-ribose 1-diphosphate (PRPP) to UMP and diphosphate. The chain is Uracil phosphoribosyltransferase from Bacillus pumilus (strain SAFR-032).